Here is a 132-residue protein sequence, read N- to C-terminus: Small ribosomal subunit protein uS19 (132 aa).

This sequence belongs to the universal ribosomal protein uS19 family. As to quaternary structure, part of the 30S ribosomal subunit.

Protein S19 forms a complex with S13 that binds strongly to the 16S ribosomal RNA. The protein is Small ribosomal subunit protein uS19 of Pyrococcus furiosus (strain ATCC 43587 / DSM 3638 / JCM 8422 / Vc1).